A 422-amino-acid polypeptide reads, in one-letter code: Dihydrolipoyllysine-residue succinyltransferase component of 2-oxoglutarate dehydrogenase complex (422 aa).

The 76-residue stretch at 1-76 folds into the Lipoyl-binding domain; the sequence is MPEVKVPELA…EVGQAIAVIG (76 aa). The residue at position 42 (lysine 42) is an N6-lipoyllysine. The interval 77-184 is disordered; that stretch reads EGSGNASKEN…APAKEEKKYN (108 aa). Composition is skewed to polar residues over residues 80–94 and 114–130; these read GNASKENSNDNTPQQ and EVNQTNDYNQQRVNATP. A Peripheral subunit-binding (PSBD) domain is found at 127–163; sequence NATPSARRYARENGVNLAEVSPKTNDVVRKEDIDKKQ. Residues 152-163 are compositionally biased toward basic and acidic residues; sequence DVVRKEDIDKKQ. A compositionally biased stretch (low complexity) spans 164-176; the sequence is QAPASTQTTQQAP. Active-site residues include histidine 393 and aspartate 397.

This sequence belongs to the 2-oxoacid dehydrogenase family. In terms of assembly, forms a 24-polypeptide structural core with octahedral symmetry. Part of the 2-oxoglutarate dehydrogenase (OGDH) complex composed of E1 (2-oxoglutarate dehydrogenase), E2 (dihydrolipoamide succinyltransferase) and E3 (dihydrolipoamide dehydrogenase); the complex contains multiple copies of the three enzymatic components (E1, E2 and E3). It depends on (R)-lipoate as a cofactor.

The catalysed reaction is N(6)-[(R)-dihydrolipoyl]-L-lysyl-[protein] + succinyl-CoA = N(6)-[(R)-S(8)-succinyldihydrolipoyl]-L-lysyl-[protein] + CoA. It functions in the pathway amino-acid degradation; L-lysine degradation via saccharopine pathway; glutaryl-CoA from L-lysine: step 6/6. Functionally, E2 component of the 2-oxoglutarate dehydrogenase (OGDH) complex which catalyzes the second step in the conversion of 2-oxoglutarate to succinyl-CoA and CO(2). This is Dihydrolipoyllysine-residue succinyltransferase component of 2-oxoglutarate dehydrogenase complex (odhB) from Staphylococcus aureus (strain bovine RF122 / ET3-1).